We begin with the raw amino-acid sequence, 499 residues long: MKKYILALDQGTTSSRAIIFDKEQNILGVSQKEFTQIYPNQGWVEHNPLEIWASQYGVLQEVIAKTNITQEEVAAIGITNQRETTIVWDKNTGEPVYNAIVWQCRRTAGIIEELKLDKEFSEYVKENTGLLLDAYFSATKIKWILDNVEGARERAEKGELLFGTVDTWLVWKLTNGKVHVTDYTNASRTMLYNIKELRWDERILEKLNIPKSMLPEVKNSSEVYGYTNLGGTGGVRVPIAGMAGDQQCALFGQTCFEEGSVKNTYGTGCFLLMNTGEKMIHSKNGLVSTIAVGIDGKVQYALEGSVFVGGAVIQWIRDELKLVTDAADTEYFAQKVEDNGGVYVVPAFTGLGAPYWDMYARGAIFGLTRGANRNHIIRAALESIAYQSKDLIDAMQEDAGCKLTRLKVDGGASRNNLLMQFQADITGAEVVRPIITETTALGAAYLAGLAVGFWKSKEEIAEKWAVSQSYSPNLAEEKKEKLYKGWKKAVKRAEGWEEE.

Thr-12 lines the ADP pocket. 3 residues coordinate ATP: Thr-12, Thr-13, and Ser-14. Position 12 (Thr-12) interacts with sn-glycerol 3-phosphate. ADP is bound at residue Arg-16. Residues Arg-82, Glu-83, Tyr-135, and Asp-245 each contribute to the sn-glycerol 3-phosphate site. The glycerol site is built by Arg-82, Glu-83, Tyr-135, Asp-245, and Gln-246. ADP is bound by residues Thr-267 and Gly-310. The ATP site is built by Thr-267, Gly-310, Gln-314, and Gly-411. Residues Gly-411 and Asn-415 each contribute to the ADP site.

The protein belongs to the FGGY kinase family. As to quaternary structure, homotetramer and homodimer (in equilibrium).

The enzyme catalyses glycerol + ATP = sn-glycerol 3-phosphate + ADP + H(+). It functions in the pathway polyol metabolism; glycerol degradation via glycerol kinase pathway; sn-glycerol 3-phosphate from glycerol: step 1/1. Activated by phosphorylation and inhibited by fructose 1,6-bisphosphate (FBP). Functionally, key enzyme in the regulation of glycerol uptake and metabolism. Catalyzes the phosphorylation of glycerol to yield sn-glycerol 3-phosphate. This is Glycerol kinase from Clostridium beijerinckii (strain ATCC 51743 / NCIMB 8052) (Clostridium acetobutylicum).